The primary structure comprises 289 residues: MGPSSSLTTIVATVLLVTLFGSAYASNFFDEFDLTWGDHRGKIFNGGNMLSLSLDQVSGSGFKSKKEYLFGRIDMQLKLVAGNSAGTVTAYYLSSQGATHDEIDFEFLGNETGKPYVLHTNVFAQGKGDREQQFYLWFDPTKNFHTYSIVWRPQHIIFLVDNLPIRVFNNAEKLGVPFPKSQPMRIYSSLWNADDWATRGGLVKTDWSKAPFTAYYRGFNAAACTASSGCDPKFKSSFGDGKLQVATELNAYGRRRLRWVQKYFMIYNYCSDLKRFPRGFPPECKKSRV.

Residues Met1–Ala25 form the signal peptide. The GH16 domain maps to Ser26–Tyr216. The active-site Nucleophile is Glu102. The active-site Proton donor is the Glu106. Glu106 provides a ligand contact to xyloglucan. The N-linked (GlcNAc...) asparagine glycan is linked to Asn110. Xyloglucan-binding positions include His119 to Asn121, Asp129 to Glu131, Asp195 to Trp196, and Gly200. 2 disulfide bridges follow: Cys224–Cys230 and Cys270–Cys284. Arg275 provides a ligand contact to xyloglucan.

It belongs to the glycosyl hydrolase 16 family. XTH group 2 subfamily. Contains at least one intrachain disulfide bond essential for its enzymatic activity. In terms of tissue distribution, strongly expressed in roots, hypocotyls and cotyledons. Aslo detected in inflorescence stems and in the carpels and styles in flowers.

The protein localises to the secreted. Its subcellular location is the cell wall. It localises to the extracellular space. The protein resides in the apoplast. It carries out the reaction breaks a beta-(1-&gt;4) bond in the backbone of a xyloglucan and transfers the xyloglucanyl segment on to O-4 of the non-reducing terminal glucose residue of an acceptor, which can be a xyloglucan or an oligosaccharide of xyloglucan.. The catalysed reaction is xyloglucan + H2O = xyloglucan oligosaccharides.. Functionally, catalyzes xyloglucan endohydrolysis (XEH) and/or endotransglycosylation (XET). Cleaves and religates xyloglucan polymers, an essential constituent of the primary cell wall, and thereby participates in cell wall construction of growing tissues. Has a high XET activity, but little or no XEH activity in vitro. Acceptor preferences are XXXGol &gt; XLLGol = XLFGol &gt; XXLGol &gt; XXFGol. The polypeptide is Xyloglucan endotransglucosylase/hydrolase protein 15 (Arabidopsis thaliana (Mouse-ear cress)).